The primary structure comprises 407 residues: Tryptophan synthase beta chain (407 aa).

Lys-86 is modified (N6-(pyridoxal phosphate)lysine).

The protein belongs to the TrpB family. Tetramer of two alpha and two beta chains. Requires pyridoxal 5'-phosphate as cofactor.

It carries out the reaction (1S,2R)-1-C-(indol-3-yl)glycerol 3-phosphate + L-serine = D-glyceraldehyde 3-phosphate + L-tryptophan + H2O. Its pathway is amino-acid biosynthesis; L-tryptophan biosynthesis; L-tryptophan from chorismate: step 5/5. In terms of biological role, the beta subunit is responsible for the synthesis of L-tryptophan from indole and L-serine. The polypeptide is Tryptophan synthase beta chain (Shewanella woodyi (strain ATCC 51908 / MS32)).